Here is a 368-residue protein sequence, read N- to C-terminus: C-X-C chemokine receptor type 3 (368 aa).

The Extracellular segment spans residues 1–53; it reads MVLEVSDHQVLNDAEVAALLENFSSSYDYGENESDSCCTSPPCPQDFSLNFDR. Asparagine 22 is a glycosylation site (N-linked (GlcNAc...) asparagine). Tyrosine 27 and tyrosine 29 each carry sulfotyrosine. Asparagine 32 carries N-linked (GlcNAc...) asparagine glycosylation. Residues 54–80 form a helical membrane-spanning segment; the sequence is AFLPALYSLLFLLGLLGNGAVAAVLLS. At 81–89 the chain is on the cytoplasmic side; the sequence is RRTALSSTD. The chain crosses the membrane as a helical span at residues 90–110; sequence TFLLHLAVADTLLVLTLPLWA. The Extracellular segment spans residues 111 to 125; it reads VDAAVQWVFGSGLCK. Cysteine 124 and cysteine 203 are joined by a disulfide. A helical transmembrane segment spans residues 126–147; sequence VAGALFNINFYAGALLLACISF. The Cytoplasmic portion of the chain corresponds to 148-169; the sequence is DRYLNIVHATQLYRRGPPARVT. A helical membrane pass occupies residues 170–189; the sequence is LTCLAVWGLCLLFALPDFIF. Residues 190–212 lie on the Extracellular side of the membrane; sequence LSAHHDERLNATHCQYNFPQVGR. Residues 213-233 traverse the membrane as a helical segment; the sequence is TALRVLQLVAGFLLPLLVMAY. The Cytoplasmic segment spans residues 234 to 255; sequence CYAHILAVLLVSRGQRRLRAMR. The helical transmembrane segment at 256–277 threads the bilayer; it reads LVVVVVVAFALCWTPYHLVVLV. The Extracellular segment spans residues 278-298; the sequence is DILMDLGALARNCGRESRVDV. The helical transmembrane segment at 299–321 threads the bilayer; it reads AKSVTSGLGYMHCCLNPLLYAFV. Over 322-368 the chain is Cytoplasmic; it reads GVKFRERMWMLLLRLGCPNQRGLQRQPSSSRRDSSWSETSEASYSGL. Residues 342–368 form a disordered region; the sequence is RGLQRQPSSSRRDSSWSETSEASYSGL. The span at 357-368 shows a compositional bias: low complexity; it reads WSETSEASYSGL.

Belongs to the G-protein coupled receptor 1 family. In terms of assembly, homomer. Forms heteromers with ACKR4. Interacts with PF4/CXCL4. Post-translationally, sulfation on Tyr-27 and Tyr-29 is essential for CXCL10 binding and subsequent signal transduction induction. N-glycosylated. In terms of tissue distribution, isoform 1 and isoform 2 are mainly expressed in heart, kidney, liver and skeletal muscle. Isoform 1 is also expressed in placenta. Isoform 2 is expressed in endothelial cells. Expressed in T-cells (at protein level).

The protein resides in the cell membrane. Functionally, receptor for the C-X-C chemokine CXCL9, CXCL10 and CXCL11 and mediates the proliferation, survival and angiogenic activity of human mesangial cells (HMC) through a heterotrimeric G-protein signaling pathway. Binds to CCL21. Probably promotes cell chemotaxis response. Upon activation by PF4, induces activated T-lymphocytes migration mediated via downstream Ras/extracellular signal-regulated kinase (ERK) signaling. Its function is as follows. Receptor for the C-X-C chemokine CXCL4 and also mediates the inhibitory activities of CXCL9, CXCL10 and CXCL11 on the proliferation, survival and angiogenic activity of human microvascular endothelial cells (HMVEC) through a cAMP-mediated signaling pathway. Does not promote cell chemotaxis respons. Interaction with CXCL4 or CXCL10 leads to activation of the p38MAPK pathway and contributes to inhibition of angiogenesis. Overexpression in renal cancer cells down-regulates expression of the anti-apoptotic protein HMOX1 and promotes apoptosis. Mediates the activity of CXCL11. The polypeptide is C-X-C chemokine receptor type 3 (CXCR3) (Homo sapiens (Human)).